The sequence spans 596 residues: Cytochrome P450 monooxygenase FUM15 (596 aa).

The disordered stretch occupies residues 476–512 (DRWLSPKNGNREATEQSKFKIGNQKRDSTAAPEVTQE). Positions 484-503 (GNREATEQSKFKIGNQKRDS) are enriched in basic and acidic residues. Residue cysteine 536 coordinates heme.

The protein belongs to the cytochrome P450 family. Heme serves as cofactor.

The protein localises to the endoplasmic reticulum. The protein operates within secondary metabolite biosynthesis. Functionally, cytochrome P450 monooxygenase; part of the gene cluster that mediates the biosynthesis of fumonisins B1 (FB1), B2 (FB2), B3 (FB3), and B4 (FB4), which are carcinogenic mycotoxins. Within the pathway, FUM15 may be responsible for the hydroxylations at positions C-14 and/or C-15. Also plays a role in self-protection from FB1 toxicity, probably through derivatization of FB1, and may contribute to ceramide biosynthesis. The biosynthesis starts with the FUM1-catalyzed carbon chain assembly from one molecule of acetyl-CoA, eight molecules of malonyl-CoA, and two molecules of methionine (in S-adenosyl form). The C18 polyketide chain is released from the enzyme by a nucleophilic attack of a carbanion, which is derived from R-carbon of alanine by decarboxylation, on the carbonyl carbon of polyketide acyl chain. This step is catalyzed by the pyridoxal 5'-phosphate-dependent aminoacyl transferase FUM8. The resultant 3-keto intermediate is then stereospecifically reduced to a 3-hydroxyl product by reductase FUM13. Subsequent oxidations at C-10 by the cytochrome P450 monooxygenase FUM2, C-14 and C-15 by FUM6, FUM12 or FUM15, tricarballylic esterification of the hydroxyl groups on C-14 and C-15 by acyltransferase FUM14, and C-5 hydroxylation by 2-keto-glutarate-dependent dioxygenase FUM3 furnish the biosynthesis of fumonisins. The tricarballylic moieties are most likely derived from the citric acid cycle, and their addition to the carbon backbone may involve FUM7, FUM10, FUM11 and FUM14. The polypeptide is Cytochrome P450 monooxygenase FUM15 (Gibberella moniliformis (strain M3125 / FGSC 7600) (Maize ear and stalk rot fungus)).